A 371-amino-acid chain; its full sequence is Gamma-tocopherol methyltransferase, chloroplastic (371 aa).

The N-terminal 65 residues, 1-65 (MAAAPVFFPS…NSNRIASRLQ (65 aa)), are a transit peptide targeting the chloroplast. The segment at 153-162 (IVDVGCGIGG) is SAM motif I. The segment at 216 to 224 (GQFDLVWSM) is SAM motif II. The segment at 243–252 (VAAPGATIII) is SAM motif III.

This sequence belongs to the class I-like SAM-binding methyltransferase superfamily. gTMT family. Homodimer.

It localises to the plastid. Its subcellular location is the chloroplast inner membrane. The enzyme catalyses picrinine + S-adenosyl-L-methionine = ervincine + S-adenosyl-L-homocysteine + H(+). Its pathway is alkaloid biosynthesis; vindoline biosynthesis. Functionally, S-adenosyl-L-methionine-dependent N-methyltransferase involved in the biosynthesis of biologically active monoterpenoid indole alkaloids (MIAs) natural products including vindoline. Inactive with picrinine as substrate. This Catharanthus roseus (Madagascar periwinkle) protein is Gamma-tocopherol methyltransferase, chloroplastic.